The chain runs to 372 residues: Chaperone protein DnaJ (372 aa).

Positions 5–70 constitute a J domain; that stretch reads DYYDLLEVGR…EKRAGYDRYG (66 aa). The CR-type zinc finger occupies 134-212; the sequence is GIQAPIHYVT…CGGSGRRRDE (79 aa). Residues Cys147, Cys150, Cys164, Cys167, Cys186, Cys189, Cys200, and Cys203 each coordinate Zn(2+). CXXCXGXG motif repeat units follow at residues 147–154, 164–171, 186–193, and 200–207; these read CDTCQGTG, CHTCQGSG, CTTCYGEG, and CKKCGGSG.

Belongs to the DnaJ family. Homodimer. Zn(2+) serves as cofactor.

It is found in the cytoplasm. In terms of biological role, participates actively in the response to hyperosmotic and heat shock by preventing the aggregation of stress-denatured proteins and by disaggregating proteins, also in an autonomous, DnaK-independent fashion. Unfolded proteins bind initially to DnaJ; upon interaction with the DnaJ-bound protein, DnaK hydrolyzes its bound ATP, resulting in the formation of a stable complex. GrpE releases ADP from DnaK; ATP binding to DnaK triggers the release of the substrate protein, thus completing the reaction cycle. Several rounds of ATP-dependent interactions between DnaJ, DnaK and GrpE are required for fully efficient folding. Also involved, together with DnaK and GrpE, in the DNA replication of plasmids through activation of initiation proteins. This is Chaperone protein DnaJ from Wolbachia sp. subsp. Drosophila simulans (strain wRi).